A 61-amino-acid polypeptide reads, in one-letter code: Photosystem II reaction center X protein (61 aa).

Residues 26–46 form a helical membrane-spanning segment; the sequence is IGSFIAAALLIVVPATAFLIF.

The protein belongs to the PsbX family. Type 2 subfamily. In terms of assembly, PSII consists of a core antenna complex that captures photons, and an electron transfer chain that converts photonic excitation into a charge separation. PSII forms dimeric complexes.

The protein localises to the cellular thylakoid membrane. Its function is as follows. Involved in the binding and/or turnover of quinones at the Q(B) site of Photosystem II. This is Photosystem II reaction center X protein from Prochlorococcus marinus (strain AS9601).